Here is a 157-residue protein sequence, read N- to C-terminus: Phosphopantetheine adenylyltransferase (157 aa).

Ser8 is a substrate binding site. ATP is bound by residues 8–9 (SF) and His16. Substrate-binding residues include Lys40, Thr72, and Arg86. Residues 87-89 (GLR), Glu97, and 122-128 (FSFLSSS) contribute to the ATP site.

The protein belongs to the bacterial CoaD family. In terms of assembly, homohexamer. It depends on Mg(2+) as a cofactor.

It is found in the cytoplasm. It carries out the reaction (R)-4'-phosphopantetheine + ATP + H(+) = 3'-dephospho-CoA + diphosphate. The protein operates within cofactor biosynthesis; coenzyme A biosynthesis; CoA from (R)-pantothenate: step 4/5. Its function is as follows. Reversibly transfers an adenylyl group from ATP to 4'-phosphopantetheine, yielding dephospho-CoA (dPCoA) and pyrophosphate. The sequence is that of Phosphopantetheine adenylyltransferase from Prochlorococcus marinus (strain MIT 9211).